We begin with the raw amino-acid sequence, 40 residues long: Photosystem II reaction center protein J (40 aa).

Residues 8–28 (IPLWLVATVAGLAAIGVLGIF) traverse the membrane as a helical segment.

This sequence belongs to the PsbJ family. PSII is composed of 1 copy each of membrane proteins PsbA, PsbB, PsbC, PsbD, PsbE, PsbF, PsbH, PsbI, PsbJ, PsbK, PsbL, PsbM, PsbT, PsbX, PsbY, PsbZ, Psb30/Ycf12, at least 3 peripheral proteins of the oxygen-evolving complex and a large number of cofactors. It forms dimeric complexes.

Its subcellular location is the plastid. It is found in the cyanelle thylakoid membrane. In terms of biological role, one of the components of the core complex of photosystem II (PSII). PSII is a light-driven water:plastoquinone oxidoreductase that uses light energy to abstract electrons from H(2)O, generating O(2) and a proton gradient subsequently used for ATP formation. It consists of a core antenna complex that captures photons, and an electron transfer chain that converts photonic excitation into a charge separation. This is Photosystem II reaction center protein J from Cyanophora paradoxa.